The primary structure comprises 133 residues: NAD(P)H-quinone oxidoreductase subunit 3 (133 aa).

Transmembrane regions (helical) follow at residues 22-44 (YLLG…SRLL), 77-97 (MFAL…PWAV), and 102-122 (LGLL…VGLA).

Belongs to the complex I subunit 3 family. In terms of assembly, NDH-1 can be composed of about 15 different subunits; different subcomplexes with different compositions have been identified which probably have different functions.

It is found in the cellular thylakoid membrane. It catalyses the reaction a plastoquinone + NADH + (n+1) H(+)(in) = a plastoquinol + NAD(+) + n H(+)(out). The enzyme catalyses a plastoquinone + NADPH + (n+1) H(+)(in) = a plastoquinol + NADP(+) + n H(+)(out). Functionally, NDH-1 shuttles electrons from an unknown electron donor, via FMN and iron-sulfur (Fe-S) centers, to quinones in the respiratory and/or the photosynthetic chain. The immediate electron acceptor for the enzyme in this species is believed to be plastoquinone. Couples the redox reaction to proton translocation, and thus conserves the redox energy in a proton gradient. Cyanobacterial NDH-1 also plays a role in inorganic carbon-concentration. The sequence is that of NAD(P)H-quinone oxidoreductase subunit 3 from Synechococcus sp. (strain ATCC 27144 / PCC 6301 / SAUG 1402/1) (Anacystis nidulans).